The following is a 214-amino-acid chain: Thymidylate kinase (214 aa).

10 to 17 (GPDGAGKT) is an ATP binding site.

Belongs to the thymidylate kinase family.

It catalyses the reaction dTMP + ATP = dTDP + ADP. Its function is as follows. Phosphorylation of dTMP to form dTDP in both de novo and salvage pathways of dTTP synthesis. The sequence is that of Thymidylate kinase from Latilactobacillus sakei subsp. sakei (strain 23K) (Lactobacillus sakei subsp. sakei).